The primary structure comprises 112 residues: Head virion protein G6P (112 aa).

3 helical membrane passes run 3 to 23 (VLLG…TLFG), 36 to 56 (IAIA…ILVG), and 80 to 100 (NALP…IFDV).

The protein belongs to the inovirus G6P protein family. In terms of assembly, interacts with G3P; this interaction is required for proper integration of G3P and G6P into the virion.

It is found in the virion. The protein resides in the host membrane. Plays essential roles both in the entry of the viral genome into the bacterial host and in budding process. The formation of the G3P-G6P complex termed adsorption complex is essential for correct termination of filamentous phage assembly. This is Head virion protein G6P (VI) from Escherichia coli (Bacteriophage f1).